The sequence spans 357 residues: DENN domain-containing protein 10 (357 aa).

The 136-residue stretch at 1 to 136 folds into the uDENN domain; that stretch reads MAAVVAMDTQ…IAVLTKGICQ (136 aa). The cDENN domain maps to 152–299; sequence KAYLAGSIKD…PEKSDSQVIQ (148 aa). The 57-residue stretch at 301-357 folds into the dDENN domain; the sequence is IALKTKEIFTHLAPFSEVSDDGGKVILNVEALKQQRFPPATENFLYHLAAAEQMLKV.

This sequence belongs to the DENND10 family. In terms of assembly, interacts with the coiled-coil heterodimer of CCDC22 and CCDC93; the interaction is direct. Interacts with RAB27A and RAB27B (GDP-bound forms preferentially).

Its subcellular location is the late endosome. Functionally, guanine nucleotide exchange factor (GEF) regulating homeostasis of late endocytic pathway, including endosomal positioning, maturation and secretion, possibly through activating Rab proteins such as RAB27A and RAB27B. Promotes the exchange of GDP to GTP, converting inactive GDP-bound RAB27A and RAB27B into their active GTP-bound form. In Mus musculus (Mouse), this protein is DENN domain-containing protein 10.